The primary structure comprises 258 residues: Regulatory protein RecX (258 aa).

It belongs to the RecX family.

It is found in the cytoplasm. Its function is as follows. Modulates RecA activity. The polypeptide is Regulatory protein RecX (Streptococcus agalactiae serotype Ia (strain ATCC 27591 / A909 / CDC SS700)).